Here is a 79-residue protein sequence, read N- to C-terminus: Short neurotoxin 3 (79 aa).

The first 21 residues, 1 to 21 (MKTLLLTLVMVTIMCLDLGYT), serve as a signal peptide directing secretion. 4 disulfides stabilise this stretch: Cys-24–Cys-41, Cys-34–Cys-59, Cys-63–Cys-71, and Cys-72–Cys-77.

It belongs to the three-finger toxin family. Short-chain subfamily. Type III alpha-neurotoxin sub-subfamily. Expressed by the venom gland.

The protein resides in the secreted. Binds with high affinity to muscle nicotinic acetylcholine receptor (nAChR) and hinders acetylcholine binding to the receptor, thereby impairing neuromuscular transmission. Competes with the binding of alpha-bungarotoxin on muscle AChR (from Torpedo) with an IC(50) of 0.30 uM. Causes muscle paralysis, spasms and increased respiration. This chain is Short neurotoxin 3, found in Pseudonaja textilis (Eastern brown snake).